The following is a 137-amino-acid chain: Holo-[acyl-carrier-protein] synthase (137 aa).

2 residues coordinate Mg(2+): D8 and E61.

Belongs to the P-Pant transferase superfamily. AcpS family. Mg(2+) is required as a cofactor.

Its subcellular location is the cytoplasm. The enzyme catalyses apo-[ACP] + CoA = holo-[ACP] + adenosine 3',5'-bisphosphate + H(+). Its function is as follows. Transfers the 4'-phosphopantetheine moiety from coenzyme A to a Ser of acyl-carrier-protein. This Afipia carboxidovorans (strain ATCC 49405 / DSM 1227 / KCTC 32145 / OM5) (Oligotropha carboxidovorans) protein is Holo-[acyl-carrier-protein] synthase.